A 129-amino-acid chain; its full sequence is Ig lambda-1 chain V regions MOPC 104E/RPC20/J558/S104 (129 aa).

The signal sequence occupies residues 1-19 (MAWISLILSLLALSSGAIS). Residue Gln20 is modified to Pyrrolidone carboxylic acid. Residues 20-125 (QAVVTQESAL…HWVFGGGTKL (106 aa)) enclose the Ig-like domain.

The chain is Ig lambda-1 chain V regions MOPC 104E/RPC20/J558/S104 from Mus musculus (Mouse).